A 327-amino-acid chain; its full sequence is Cytochrome f (327 aa).

A signal peptide spans 1–24 (MKRIGLVFCALLLLLGMGARPAAA). The heme site is built by Y25, C45, C48, and H49. Residues 293–313 (VKWLVAFLAAITITQVLLVLK) traverse the membrane as a helical segment.

It belongs to the cytochrome f family. In terms of assembly, the 4 large subunits of the cytochrome b6-f complex are cytochrome b6, subunit IV (17 kDa polypeptide, PetD), cytochrome f and the Rieske protein, while the 4 small subunits are PetG, PetL, PetM and PetN. The complex functions as a dimer. Heme serves as cofactor.

The protein localises to the cellular thylakoid membrane. In terms of biological role, component of the cytochrome b6-f complex, which mediates electron transfer between photosystem II (PSII) and photosystem I (PSI), cyclic electron flow around PSI, and state transitions. The polypeptide is Cytochrome f (Synechococcus sp. (strain JA-2-3B'a(2-13)) (Cyanobacteria bacterium Yellowstone B-Prime)).